The chain runs to 150 residues: Large ribosomal subunit protein bL17 (150 aa).

A disordered region spans residues 126–150 (DRAKRREERLKAQREGRDHEEETDE).

It belongs to the bacterial ribosomal protein bL17 family. Part of the 50S ribosomal subunit. Contacts protein L32.

The polypeptide is Large ribosomal subunit protein bL17 (Solibacter usitatus (strain Ellin6076)).